Here is a 535-residue protein sequence, read N- to C-terminus: Probable bifunctional tRNA threonylcarbamoyladenosine biosynthesis protein (535 aa).

The kae1 stretch occupies residues 1 to 323 (MICLGLEGTA…YRTDMVEVNW (323 aa)). Fe cation contacts are provided by histidine 106, histidine 110, and tyrosine 127. L-threonylcarbamoyladenylate is bound by residues 127 to 131 (YVSGG), aspartate 159, glycine 172, glutamate 176, and asparagine 256. Aspartate 284 provides a ligand contact to Fe cation. The Protein kinase domain occupies 333–535 (KIPEHLIGKG…DVERRARYVE (203 aa)). Residues 339-347 (IGKGAEADI) and lysine 360 contribute to the ATP site. Aspartate 451 functions as the Proton acceptor; for kinase activity in the catalytic mechanism.

It in the N-terminal section; belongs to the KAE1 / TsaD family. In the C-terminal section; belongs to the protein kinase superfamily. Tyr protein kinase family. BUD32 subfamily. Component of the KEOPS complex that consists of Kae1, Bud32, Cgi121 and Pcc1; the whole complex dimerizes. The cofactor is Fe(2+).

Its subcellular location is the cytoplasm. The catalysed reaction is L-seryl-[protein] + ATP = O-phospho-L-seryl-[protein] + ADP + H(+). It carries out the reaction L-threonyl-[protein] + ATP = O-phospho-L-threonyl-[protein] + ADP + H(+). The enzyme catalyses L-threonylcarbamoyladenylate + adenosine(37) in tRNA = N(6)-L-threonylcarbamoyladenosine(37) in tRNA + AMP + H(+). Activity provided by the Kae1 region seems to be regulated via phosphorylation by the protein kinase Bud32, which is itself activated by Cgi121. Functionally, required for the formation of a threonylcarbamoyl group on adenosine at position 37 (t(6)A37) in tRNAs that read codons beginning with adenine. Is a component of the KEOPS complex that is probably involved in the transfer of the threonylcarbamoyl moiety of threonylcarbamoyl-AMP (TC-AMP) to the N6 group of A37. The Kae1 domain likely plays a direct catalytic role in this reaction. The Bud32 domain probably displays kinase activity that regulates Kae1 function. In vitro, exhibits low ATPase activity, but does not bind DNA and does not have endonuclease activity. The polypeptide is Probable bifunctional tRNA threonylcarbamoyladenosine biosynthesis protein (Methanocaldococcus jannaschii (strain ATCC 43067 / DSM 2661 / JAL-1 / JCM 10045 / NBRC 100440) (Methanococcus jannaschii)).